The following is a 911-amino-acid chain: Brevican core protein (911 aa).

The N-terminal stretch at 1–22 (MAQLFLPLLAALVLAQAPAALA) is a signal peptide. Residues 36-155 (RVRIAGDAPL…SSDAVEVKVK (120 aa)) form the Ig-like V-type domain. 5 disulfides stabilise this stretch: Cys57-Cys137, Cys179-Cys250, Cys203-Cys224, Cys277-Cys352, and Cys301-Cys322. Asn130 is a glycosylation site (N-linked (GlcNAc...) asparagine). Link domains follow at residues 157–252 (VVFL…YCYA) and 257–354 (GELF…YCFR). Asn337 is a glycosylation site (N-linked (GlcNAc...) asparagine). The disordered stretch occupies residues 391–641 (QLPQEATESE…PTDSASRGGV (251 aa)). At Ser418 the chain carries Phosphoserine. O-linked (Xyl...) (chondroitin sulfate) serine glycosylation is present at Ser418. Residues 454 to 478 (EEEEKYEDEEEKEEEEEEEEVEDEA) are compositionally biased toward acidic residues. O-glycosylated at two sites stretches follow at residues 520–530 (SPLPDGESEAS) and 540–545 (TETLPT). Residues 569–575 (TGGPELS) are O-glycosylated at one site. The span at 612–627 (EDNSGRTAPAGTSVQA) shows a compositional bias: polar residues. Ala646 carries the GPI-anchor amidated alanine lipid modification. The EGF-like domain maps to 646 to 682 (ASGDCVPSPCHNGGTCLEEEEGVRCLCLPGYGGDLCD). Cystine bridges form between Cys650–Cys661, Cys655–Cys670, Cys672–Cys681, Cys688–Cys699, Cys716–Cys808, Cys784–Cys800, Cys815–Cys858, and Cys844–Cys871. Positions 695-809 (FQGACYKHFS…CNYHLSYTCK (115 aa)) constitute a C-type lectin domain. The region spanning 813-873 (VSCGPPPELP…WEAPQISCVP (61 aa)) is the Sushi domain. O-linked (GalNAc...) serine glycans are attached at residues Ser905 and Ser906.

The protein belongs to the aggrecan/versican proteoglycan family. In terms of assembly, interacts with TNR. In terms of processing, O-glycosylated; contains chondroitin sulfate. O-glycosylated with a core 1 or possibly core 8 glycan. In terms of tissue distribution, expressed in the retina, specifically in the inner nuclear layer, inner plexiform layer and ganglion cell layer (at protein level). Detected in cerebrospinal fluid (at protein level). Detected in urine (at protein level).

It localises to the secreted. Its subcellular location is the extracellular space. It is found in the extracellular matrix. The protein localises to the membrane. In terms of biological role, may play a role in the terminally differentiating and the adult nervous system during postnatal development. Could stabilize interactions between hyaluronan (HA) and brain proteoglycans. This is Brevican core protein (BCAN) from Homo sapiens (Human).